The following is a 657-amino-acid chain: MADKIQLMKDKIEILDRAAKAYYQENTEIMSNIEYDKLYDELLELEKETGVVLSNSPSIHVGYELLSNLPKERHEKPMLSLDKTKDVGTLKEWLGTQKGILSWKLDGLTIVLTYQDGHLVKAVTRGTGEEGEVITNNARVFRNLPVTIAYKGTLILRGEAIIRYSDFIKINNEIADVGVKYKNPRNLCSGSVRQLNNKVTSERNVYFFGFSLVKADNVELDNSRASQMNWLKNQGFDIVDFKEVTSSNIEETVQWFSQNIEANDFPSDGLVLTFEDIAYGESLGSTAKFPRDSIAFKWRDEIKETTLLNIEWSPSRTGLINPIAIFEPVELEGTTVSRASIHNISIMEGLELGIGDTIGVYKANMIIPQISENLTRSGMAPIPEECPVCKGKTEIKQENGVKTLYCVNNECLAKQIKSFTHFVGRDAMNMEGLSEATLEKLIAKGLIKELADLFHIEKYKNEILELEGLGEKSFNKLITSINKARKTTAVRLLYSLGIPNVGLSNAKLICRYFKYDWNKIENAEFSELIQIGGIGDIMAESFIRFFSDEKKKVIVQDVLNELELEEVQLSQSEQIFENLNFVITGSVEQFKNRDELKDVIEEKGGKVTGAVTSKTNYLINNDNMSNSSKNKKAKELNISIITEAQFLEWLNNGVRPE.

Residue 80–81 coordinates NAD(+); that stretch reads SL. Catalysis depends on lysine 104, which acts as the N6-AMP-lysine intermediate. NAD(+) is bound by residues arginine 125, glutamate 159, and lysine 297. 4 residues coordinate Zn(2+): cysteine 386, cysteine 389, cysteine 406, and cysteine 411. The BRCT domain occupies 571 to 657; the sequence is QSEQIFENLN…EWLNNGVRPE (87 aa).

Belongs to the NAD-dependent DNA ligase family. LigA subfamily. The cofactor is Mg(2+). Mn(2+) is required as a cofactor.

It catalyses the reaction NAD(+) + (deoxyribonucleotide)n-3'-hydroxyl + 5'-phospho-(deoxyribonucleotide)m = (deoxyribonucleotide)n+m + AMP + beta-nicotinamide D-nucleotide.. In terms of biological role, DNA ligase that catalyzes the formation of phosphodiester linkages between 5'-phosphoryl and 3'-hydroxyl groups in double-stranded DNA using NAD as a coenzyme and as the energy source for the reaction. It is essential for DNA replication and repair of damaged DNA. The chain is DNA ligase from Ruminiclostridium cellulolyticum (strain ATCC 35319 / DSM 5812 / JCM 6584 / H10) (Clostridium cellulolyticum).